We begin with the raw amino-acid sequence, 515 residues long: Glucose-6-phosphate 1-dehydrogenase (515 aa).

Alanine 2 is subject to N-acetylalanine. Serine 8 is modified (phosphoserine). A Phosphothreonine modification is found at threonine 10. Residues 38-45 (GASGDLAK) and arginine 72 contribute to the NADP(+) site. The residue at position 89 (lysine 89) is an N6-acetyllysine. NADP(+) is bound by residues tyrosine 147 and lysine 171. D-glucose 6-phosphate-binding positions include lysine 171, 201 to 205 (HYLGK), glutamate 239, and aspartate 258. Residue lysine 171 is modified to N6-(2-hydroxyisobutyryl)lysine; alternate. The residue at position 171 (lysine 171) is an N6-acetyllysine; alternate. Residue histidine 263 is the Proton acceptor of the active site. Arginine 357 is an NADP(+) binding site. Residues lysine 360 and arginine 365 each contribute to the D-glucose 6-phosphate site. Positions 366, 370, and 393 each coordinate NADP(+). Glutamine 395 contacts D-glucose 6-phosphate. NADP(+)-binding positions include 401–403 (YTK) and 421–423 (DLT). Lysine 403 carries the N6-acetyllysine modification. Lysine 432 is modified (N6-acetyllysine). Arginine 487 contributes to the NADP(+) binding site. Lysine 497 is modified (N6-acetyllysine). NADP(+) is bound by residues tyrosine 503 and tryptophan 509. Tyrosine 503 carries the phosphotyrosine modification.

This sequence belongs to the glucose-6-phosphate dehydrogenase family. As to quaternary structure, homotetramer; dimer of dimers. Interacts with SIRT2; the interaction is enhanced by H(2)O(2) treatment. Forms a ternary complex with ALDOB and TP53; this interaction is direct. ALDOB stabilizes the complex inhibiting G6PD activity and keeping oxidative pentose phosphate metabolism in check. In terms of processing, acetylated by ELP3 at Lys-403; acetylation inhibits its homodimerization and enzyme activity. Deacetylated by SIRT2 at Lys-403; deacetylation stimulates its enzyme activity.

It is found in the cytoplasm. It localises to the cytosol. The protein localises to the membrane. It catalyses the reaction D-glucose 6-phosphate + NADP(+) = 6-phospho-D-glucono-1,5-lactone + NADPH + H(+). Its pathway is carbohydrate degradation; pentose phosphate pathway; D-ribulose 5-phosphate from D-glucose 6-phosphate (oxidative stage): step 1/3. In terms of biological role, cytosolic glucose-6-phosphate dehydrogenase that catalyzes the first and rate-limiting step of the oxidative branch within the pentose phosphate pathway/shunt, an alternative route to glycolysis for the dissimilation of carbohydrates and a major source of reducing power and metabolic intermediates for fatty acid and nucleic acid biosynthetic processes. The polypeptide is Glucose-6-phosphate 1-dehydrogenase (G6PD) (Cricetulus griseus (Chinese hamster)).